A 136-amino-acid polypeptide reads, in one-letter code: T-cell receptor alpha chain constant (136 aa).

Residues 19–103 (STLCLFTDFD…LTEKSFETDM (85 aa)) enclose the Ig-like C1-type domain. Cysteine 22 and cysteine 72 are oxidised to a cystine. N-linked (GlcNAc...) asparagine glycosylation is found at asparagine 66, asparagine 80, and asparagine 109. The tract at residues 90–111 (CDATLTEKSFETDMNLNFQNLS) is connecting peptide. A helical transmembrane segment spans residues 111-131 (SVMGLRILLLKVAGFNLLMTL). Over 132-136 (RLWSS) the chain is Cytoplasmic.

As to quaternary structure, alpha-beta TR is a heterodimer composed of an alpha and beta chain; disulfide-linked. The alpha-beta TR is associated with the transmembrane signaling CD3 coreceptor proteins to form the TR-CD3 (TcR or TCR). The assembly of alpha-beta TR heterodimers with CD3 occurs in the endoplasmic reticulum where a single alpha-beta TR heterodimer associates with one CD3D-CD3E heterodimer, one CD3G-CD3E heterodimer and one CD247 homodimer forming a stable octameric structure. CD3D-CD3E and CD3G-CD3E heterodimers preferentially associate with TR alpha and TR beta chains, respectively. The association of the CD247 homodimer is the last step of TcR assembly in the endoplasmic reticulum and is required for transport to the cell surface.

It is found in the cell membrane. Functionally, constant region of T cell receptor (TR) alpha chain. Alpha-beta T cell receptors are antigen specific receptors which are essential to the immune response and are present on the cell surface of T lymphocytes. Recognize peptide-major histocompatibility (MH) (pMH) complexes that are displayed by antigen presenting cells (APC), a prerequisite for efficient T cell adaptive immunity against pathogens. Binding of alpha-beta TR to pMH complex initiates TR-CD3 clustering on the cell surface and intracellular activation of LCK that phosphorylates the ITAM motifs of CD3G, CD3D, CD3E and CD247 enabling the recruitment of ZAP70. In turn, ZAP70 phosphorylates LAT, which recruits numerous signaling molecules to form the LAT signalosome. The LAT signalosome propagates signal branching to three major signaling pathways, the calcium, the mitogen-activated protein kinase (MAPK) kinase and the nuclear factor NF-kappa-B (NF-kB) pathways, leading to the mobilization of transcription factors that are critical for gene expression and essential for T cell growth and differentiation. The T cell repertoire is generated in the thymus, by V-(D)-J rearrangement. This repertoire is then shaped by intrathymic selection events to generate a peripheral T cell pool of self-MH restricted, non-autoaggressive T cells. Post-thymic interaction of alpha-beta TR with the pMH complexes shapes TR structural and functional avidity. This chain is T-cell receptor alpha chain constant, found in Mus musculus (Mouse).